The sequence spans 377 residues: Multiple sugar-binding transport ATP-binding protein MsmK (377 aa).

Residues 4–246 enclose the ABC transporter domain; sequence LNLNHIYKKY…PANKFVAGFI (243 aa). 38–45 contributes to the ATP binding site; it reads GPSGCGKS.

The protein belongs to the ABC transporter superfamily.

The protein resides in the cell membrane. Functionally, involved in a binding protein-dependent transport system responsible for the uptake of melibiose, raffinose and isomaltotriose. Probably responsible for energy coupling to the transport system. This chain is Multiple sugar-binding transport ATP-binding protein MsmK (msmK), found in Streptococcus mutans serotype c (strain ATCC 700610 / UA159).